A 391-amino-acid chain; its full sequence is Odorant receptor 67d (391 aa).

Residues 1-45 (MLKMAKVEPVERYCKVIRMIRFCVGFCGNDVADPNFRMWWLTYAV) lie on the Cytoplasmic side of the membrane. The chain crosses the membrane as a helical span at residues 46–66 (MAAIAFFFACTGYTIYVGVVI). Residues 67–71 (NGDLT) lie on the Extracellular side of the membrane. A helical transmembrane segment spans residues 72–92 (IILQALAMVGSAVQGLTKLLV). At 93 to 140 (TANNASHMREVQNTYEDIYREYGSKGDEYAKCLEKRIRITWTLLIGFM) the chain is on the cytoplasmic side. A helical transmembrane segment spans residues 141–161 (LVYIILLGLVITFPIFYLLIL). Residues 162-164 (HQK) are Extracellular-facing. A helical membrane pass occupies residues 165–185 (VLVMQFLIPFLDHTTDGGHLI). Over 186 to 191 (LTAAHV) the chain is Cytoplasmic. The chain crosses the membrane as a helical span at residues 192-212 (ILITFGGFGNYGGDMYLFLFV). Residues 213-268 (THVPLIKDIFCVKLTEFNELVMKRNDFPKVRAMLCDLLVWHQLYTRMLQTTKKIYS) lie on the Extracellular side of the membrane. Residues 269 to 289 (IVLFVQLSTTCVGLLCTISCI) traverse the membrane as a helical segment. Over 290–297 (FMKAWPAA) the chain is Cytoplasmic. A helical membrane pass occupies residues 298 to 318 (PLYLLYAAITLYTFCGLGTLV). Topologically, residues 319 to 391 (ENSNEDFLSV…FSMMLMNYLG (73 aa)) are extracellular.

The protein belongs to the insect chemoreceptor superfamily. Heteromeric odorant receptor channel (TC 1.A.69) family. Or67d subfamily. Interacts with Orco. Complexes exist early in the endomembrane system in olfactory sensory neurons (OSNs), coupling these complexes to the conserved ciliary trafficking pathway. Expressed in antenna.

It is found in the cell membrane. In terms of biological role, plays a role in detection and sensitivity to pheromones and signal transduction of the fatty-acid-derived male pheromone 11-cis vaccenyl acetate (cVA). Acts in concert with Snmp and lush to capture cVA molecules on the surface of Or67d expressing olfactory dendrites and facilitate their transfer to the odorant-receptor Orco complex. Necessary to mediate behavioral responses to cVA by regulating both male and female mating behavior. Activation of Or67d neurons by cVA inhibits courtship of other males, whereas in females their activation promotes receptivity to other males. May form a complex with Orco to form odorant-sensing units, providing sensitive and prolonged odorant signaling and calcium permeability. This chain is Odorant receptor 67d (Or67d), found in Drosophila melanogaster (Fruit fly).